A 238-amino-acid chain; its full sequence is Orotidine 5'-phosphate decarboxylase (238 aa).

Substrate is bound by residues Asp10, Lys32, 59-68 (DLKLHDIPNT), Thr122, Arg184, Gln193, Gly213, and Arg214. Lys61 functions as the Proton donor in the catalytic mechanism.

The protein belongs to the OMP decarboxylase family. Type 1 subfamily. As to quaternary structure, homodimer.

It carries out the reaction orotidine 5'-phosphate + H(+) = UMP + CO2. Its pathway is pyrimidine metabolism; UMP biosynthesis via de novo pathway; UMP from orotate: step 2/2. Functionally, catalyzes the decarboxylation of orotidine 5'-monophosphate (OMP) to uridine 5'-monophosphate (UMP). This Bacillus cereus (strain B4264) protein is Orotidine 5'-phosphate decarboxylase.